A 436-amino-acid chain; its full sequence is UPF0597 protein YhaM (436 aa).

This sequence belongs to the UPF0597 family.

This is UPF0597 protein YhaM from Salmonella heidelberg (strain SL476).